A 191-amino-acid polypeptide reads, in one-letter code: Amelogenin, X isoform (191 aa).

A signal peptide spans 1–16; sequence MGTWILFACLLGAAFA. Ser-32 is modified (phosphoserine). Residues 95 to 117 show a composition bias toward low complexity; the sequence is IPQQPMMPVPGQHSMTPIQHHQP. The disordered stretch occupies residues 95 to 191; that stretch reads IPQQPMMPVP…TDKTKREEVD (97 aa). The span at 118-171 shows a compositional bias: pro residues; the sequence is NLPPPAQQPYQPQPVQPQPHQPMQPQPPVHPMQPLPPQPPLPPMFPMQPLPPML.

Belongs to the amelogenin family. In terms of assembly, interacts with KRT5. Phosphorylated by FAM20C in vitro.

It is found in the secreted. The protein resides in the extracellular space. The protein localises to the extracellular matrix. Functionally, plays a role in biomineralization. Seems to regulate the formation of crystallites during the secretory stage of tooth enamel development. Thought to play a major role in the structural organization and mineralization of developing enamel. This Homo sapiens (Human) protein is Amelogenin, X isoform (AMELX).